Here is a 66-residue protein sequence, read N- to C-terminus: Surface composition regulator (66 aa).

It belongs to the GlgS family.

In terms of biological role, major determinant of cell surface composition. Negatively regulates motility, adhesion and synthesis of biofilm exopolysaccharides. The polypeptide is Surface composition regulator (Shigella dysenteriae serotype 1 (strain Sd197)).